A 267-amino-acid chain; its full sequence is MENSFKAALKAGRPQIGLWLGLSSSYSAELLAGPGFDWLLIDGEHAPNNVQTVLTQLQAIAPYPSQPVVRPSWNDPVQIKQLLDVGTQTLLVPMVQNADEARKAVRATRYPPAGIRGVGSALARASRWNRIPDYLQKANDQMCVLVQIETREAMKNLPQILDVEGVDGVFIGPADLSADMGYAGNPQHPEVQAAIEQAIVQIREAGKAPGILIANEQLAKRYLELGALFVAVGVDTTLLARAAEALAARFGNSSSISMAKQNNNSVY.

The active-site Proton acceptor is the His-45. Substrate is bound at residue Gln-147. A divalent metal cation is bound at residue Glu-149. Substrate is bound by residues Ala-174 and Asp-175. Asp-175 lines the a divalent metal cation pocket.

Belongs to the HpcH/HpaI aldolase family. As to quaternary structure, homohexamer; trimer of dimers. The cofactor is a divalent metal cation.

It catalyses the reaction 4-hydroxy-2-oxoheptanedioate = succinate semialdehyde + pyruvate. The protein operates within aromatic compound metabolism; 4-hydroxyphenylacetate degradation; pyruvate and succinate semialdehyde from 4-hydroxyphenylacetate: step 7/7. Its function is as follows. Catalyzes the reversible retro-aldol cleavage of 4-hydroxy-2-ketoheptane-1,7-dioate (HKHD) to pyruvate and succinic semialdehyde. The sequence is that of 4-hydroxy-2-oxo-heptane-1,7-dioate aldolase from Shigella flexneri.